A 199-amino-acid polypeptide reads, in one-letter code: Small heat shock protein hspG4 (199 aa).

The sHSP domain occupies 30–199; sequence NKRVDIIPSM…SSNTIKININ (170 aa). The interval 83–105 is disordered; sequence KNQQQQQQQQQLENSNNKENDEP.

It belongs to the small heat shock protein (HSP20) family.

The sequence is that of Small heat shock protein hspG4 (hspG4) from Dictyostelium discoideum (Social amoeba).